The primary structure comprises 263 residues: MEAFWESRTGHWAGGPAPGQFYRVPSTPSCLMDPMSAPARPITRTQNPMVTGTSVLGVKFDCGVVIAADMLGSYGSLARFRNISRIMRVNDSTMLGASGDYADFQYLKQVLGQMVIDEELFGDGHSYSPRAIHSWLTRAMYSRRSKMNPLWNTKVIGGYAGGESFLGYVDMLGVAYEAPSLATGYGAYLAQPLLREVLEKQPVLSQTEARELVERCMRVLYYRDARSYNRFQVATVTEKGVEIEGPLSAQTNWDIAHMISGFE.

Position 1 is an N-acetylmethionine (Met1). A propeptide spanning residues 1–44 (MEAFWESRTGHWAGGPAPGQFYRVPSTPSCLMDPMSAPARPITR) is cleaved from the precursor. Ser26 carries the post-translational modification Phosphoserine. At Tyr101 the chain carries Phosphotyrosine.

Belongs to the peptidase T1B family. As to quaternary structure, the 26S proteasome consists of a 20S proteasome core and two 19S regulatory subunits. The 20S proteasome core is a barrel-shaped complex made of 28 subunits that are arranged in four stacked rings. The two outer rings are each formed by seven alpha subunits, and the two inner rings are formed by seven beta subunits. The proteolytic activity is exerted by three beta-subunits PSMB5, PSMB6 and PSMB7. Forms a ternary complex with SMAD1 and OAZ1 before PSMB4 is incorporated into the 20S proteasome. Interacts with PRPF19.

It is found in the cytoplasm. It localises to the nucleus. Functionally, non-catalytic component of the 20S core proteasome complex involved in the proteolytic degradation of most intracellular proteins. This complex plays numerous essential roles within the cell by associating with different regulatory particles. Associated with two 19S regulatory particles, forms the 26S proteasome and thus participates in the ATP-dependent degradation of ubiquitinated proteins. The 26S proteasome plays a key role in the maintenance of protein homeostasis by removing misfolded or damaged proteins that could impair cellular functions, and by removing proteins whose functions are no longer required. Associated with the PA200 or PA28, the 20S proteasome mediates ubiquitin-independent protein degradation. This type of proteolysis is required in several pathways including spermatogenesis (20S-PA200 complex) or generation of a subset of MHC class I-presented antigenic peptides (20S-PA28 complex). SMAD1/OAZ1/PSMB4 complex mediates the degradation of the CREBBP/EP300 repressor SNIP1. This chain is Proteasome subunit beta type-4 (Psmb4), found in Rattus norvegicus (Rat).